Consider the following 98-residue polypeptide: Small ribosomal subunit protein uS19 (98 aa).

The interval 77-98 (TRTFRGHAGGKAEKGGSAPKRK) is disordered.

The protein belongs to the universal ribosomal protein uS19 family.

In terms of biological role, protein S19 forms a complex with S13 that binds strongly to the 16S ribosomal RNA. This chain is Small ribosomal subunit protein uS19, found in Chlorobium luteolum (strain DSM 273 / BCRC 81028 / 2530) (Pelodictyon luteolum).